The chain runs to 427 residues: TNF receptor-associated factor family protein DDB_G0285149 (427 aa).

The RING-type zinc-finger motif lies at 20 to 65 (CIVCTDLLSESHDKIQVNQCPHGHCLCSDCWTKQIENKKKECPICR). TRAF-type zinc fingers lie at residues 122–178 (THFK…INKD) and 178–234 (DHLE…KHQA). One can recognise an MATH domain in the interval 284–415 (KYSNQWVIEN…GNKLTIKFEI (132 aa)).

Belongs to the TNF receptor-associated factor family. A subfamily.

It localises to the cytoplasm. Functionally, probable adapter protein and signal transducer that links members of the tumor necrosis factor receptor family to different signaling pathways by association with the receptor cytoplasmic domain and kinases. The polypeptide is TNF receptor-associated factor family protein DDB_G0285149 (Dictyostelium discoideum (Social amoeba)).